The following is a 347-amino-acid chain: Tyrosine recombinase XerC 2 (347 aa).

The Core-binding (CB) domain maps to 17–108; sequence LVLTRYMEAH…PLKTWFKWLA (92 aa). In terms of domain architecture, Tyr recombinase spans 125–313; it reads KLPKHLPRAI…SIEHLRAIHD (189 aa). Active-site residues include R170, K195, H265, R268, and H291. Residue Y300 is the O-(3'-phospho-DNA)-tyrosine intermediate of the active site.

This sequence belongs to the 'phage' integrase family.

It is found in the cytoplasm. Its function is as follows. Site-specific tyrosine recombinase, which acts by catalyzing the cutting and rejoining of the recombining DNA molecules. The protein is Tyrosine recombinase XerC 2 of Ralstonia nicotianae (strain ATCC BAA-1114 / GMI1000) (Ralstonia solanacearum).